We begin with the raw amino-acid sequence, 333 residues long: Salivary glue protein Sgs-3 (333 aa).

Positions 1-23 are cleaved as a signal peptide; the sequence is MKLTIATALVGILLIACAHVANG. Residues 51–285 form a disordered region; it reads TCRPPTTTRC…ATARPTSKPC (235 aa). The segment covering 60–73 has biased composition (pro residues); that stretch reads CPPPTTTRCPPPTR. Residues 74 to 88 show a composition bias toward low complexity; the sequence is PAECTATTKRPTARP. Positions 89 to 277 are enriched in basic residues; it reads TTKRATTRRT…TKRATTKRAT (189 aa).

The sequence is that of Salivary glue protein Sgs-3 (Sgs3) from Drosophila erecta (Fruit fly).